Here is a 183-residue protein sequence, read N- to C-terminus: Photosystem I assembly protein Ycf4 (183 aa).

2 helical membrane-spanning segments follow: residues 17-39 (NYLLLIIMLGGGISFFIVGFLSY) and 59-81 (FIPQGITMIFYGTMAICLSIYIY).

This sequence belongs to the Ycf4 family.

The protein localises to the plastid. Its subcellular location is the chloroplast thylakoid membrane. Functionally, seems to be required for the assembly of the photosystem I complex. The protein is Photosystem I assembly protein Ycf4 of Cyanidium caldarium (Red alga).